The sequence spans 306 residues: Sulfate adenylyltransferase subunit 2 (306 aa).

Belongs to the PAPS reductase family. CysD subfamily. In terms of assembly, heterodimer composed of CysD, the smaller subunit, and CysN.

The catalysed reaction is sulfate + ATP + H(+) = adenosine 5'-phosphosulfate + diphosphate. It participates in sulfur metabolism; hydrogen sulfide biosynthesis; sulfite from sulfate: step 1/3. With CysN forms the ATP sulfurylase (ATPS) that catalyzes the adenylation of sulfate producing adenosine 5'-phosphosulfate (APS) and diphosphate, the first enzymatic step in sulfur assimilation pathway. APS synthesis involves the formation of a high-energy phosphoric-sulfuric acid anhydride bond driven by GTP hydrolysis by CysN coupled to ATP hydrolysis by CysD. The sequence is that of Sulfate adenylyltransferase subunit 2 from Brucella anthropi (strain ATCC 49188 / DSM 6882 / CCUG 24695 / JCM 21032 / LMG 3331 / NBRC 15819 / NCTC 12168 / Alc 37) (Ochrobactrum anthropi).